Here is a 307-residue protein sequence, read N- to C-terminus: UPF0276 protein HI_1600 (307 aa).

Belongs to the UPF0276 family.

The sequence is that of UPF0276 protein HI_1600 from Haemophilus influenzae (strain ATCC 51907 / DSM 11121 / KW20 / Rd).